The sequence spans 363 residues: Glutamate--cysteine ligase (363 aa).

It belongs to the glutamate--cysteine ligase type 2 family. YbdK subfamily.

It carries out the reaction L-cysteine + L-glutamate + ATP = gamma-L-glutamyl-L-cysteine + ADP + phosphate + H(+). In terms of biological role, catalyzes the synthesis of gamma-glutamylcysteine (gamma-GC), the main low-molecular-weight thiol compound instead of glutathione in halophilic archaea. This chain is Glutamate--cysteine ligase, found in Haloquadratum walsbyi (strain DSM 16790 / HBSQ001).